The sequence spans 121 residues: Protransforming growth factor alpha (121 aa).

A signal peptide is located at residue L1. Positions 2–16 (ENSTSLLSDPPVAAA) are cleaved as a propeptide — removed in mature form. The Extracellular segment spans residues 2–75 (ENSTSLLSDP…AVVAASQKKQ (74 aa)). N3 is a glycosylation site (N-linked (GlcNAc...) asparagine). The region spanning 20-60 (HFNDCPDSHTQFCFHGTCRFLVQEDRPACVCHSGYVGARCE) is the EGF-like domain. Disulfide bonds link C24–C37, C32–C48, and C50–C59. Positions 67–121 (VVAASQKKQAITALVVVSIVALAVLIITCVLIHCCQVRKHCEWCRALICRHEKPS) are cleaved as a propeptide — removed in mature form. The helical transmembrane segment at 76–101 (AITALVVVSIVALAVLIITCVLIHCC) threads the bilayer.

Interacts with the PDZ domains of MAGI3, SDCBP and SNTA1. The interaction with SDCBP, is required for the targeting to the cell surface. In the endoplasmic reticulum, in its immature form (i.e. with a prosegment and lacking full N-glycosylation), interacts with CNIH. In the Golgi apparatus, may form a complex with CNIH and GORASP2. Interacts (via cytoplasmic C-terminal domain) with NKD2. In terms of tissue distribution, hypothalamus.

Its subcellular location is the secreted. It localises to the extracellular space. The protein localises to the cell membrane. In terms of biological role, TGF alpha is a mitogenic polypeptide that is able to bind to the EGF receptor/EGFR and to act synergistically with TGF beta to promote anchorage-independent cell proliferation in soft agar. The protein is Protransforming growth factor alpha (TGFA) of Macaca mulatta (Rhesus macaque).